The following is a 452-amino-acid chain: Adenylosuccinate synthetase (452 aa).

GTP contacts are provided by residues 40–46 (GDEGKGK) and 68–70 (GHT). Catalysis depends on aspartate 41, which acts as the Proton acceptor. Aspartate 41 and glycine 68 together coordinate Mg(2+). IMP is bound by residues 41-44 (DEGK), 66-69 (NAGH), threonine 158, arginine 172, asparagine 250, threonine 265, and arginine 329. Histidine 69 acts as the Proton donor in catalysis. Residue 325-331 (VTTKRKR) coordinates substrate. Residues arginine 331, 357–359 (KLD), and 440–442 (GVG) each bind GTP.

It belongs to the adenylosuccinate synthetase family. Homodimer. It depends on Mg(2+) as a cofactor.

The protein resides in the cytoplasm. It catalyses the reaction IMP + L-aspartate + GTP = N(6)-(1,2-dicarboxyethyl)-AMP + GDP + phosphate + 2 H(+). Its pathway is purine metabolism; AMP biosynthesis via de novo pathway; AMP from IMP: step 1/2. Its function is as follows. Plays an important role in the de novo pathway and in the salvage pathway of purine nucleotide biosynthesis. Catalyzes the first committed step in the biosynthesis of AMP from IMP. In Drosophila grimshawi (Hawaiian fruit fly), this protein is Adenylosuccinate synthetase.